Consider the following 386-residue polypeptide: Protein phosphatase methylesterase 1 (386 aa).

A disordered region spans residues 1-38; it reads MSALEKSMHLGRLPSRPPLPGSGGSQSGAKMRMGPGRK. Ser-15 is modified (phosphoserine). Arg-16 bears the Asymmetric dimethylarginine; alternate mark. Arg-16 bears the Omega-N-methylarginine; alternate mark. Catalysis depends on residues Ser-156 and Asp-181. Residues 255-265 show a composition bias toward acidic residues; sequence IEEEEEDEEGS. The interval 255–280 is disordered; that stretch reads IEEEEEDEEGSESVNKRKKEDDMETK. Residues 268 to 280 are compositionally biased toward basic and acidic residues; sequence VNKRKKEDDMETK. His-349 is a catalytic residue.

This sequence belongs to the AB hydrolase superfamily. In terms of assembly, binds PPP2CA and PPP2CB. Post-translationally, phosphorylated by SIK1 following increases in intracellular sodium, leading to dissociation from the protein phosphatase 2A (PP2A) complex and subsequent dephosphorylation of sodium/potassium-transporting ATPase ATP1A1. Ubiquitous. Highly expressed in testis and brain.

It catalyses the reaction [phosphatase 2A protein]-C-terminal L-leucine methyl ester + H2O = [phosphatase 2A protein]-C-terminal L-leucine + methanol + H(+). Functionally, demethylates proteins that have been reversibly carboxymethylated. Demethylates PPP2CB (in vitro) and PPP2CA. Binding to PPP2CA displaces the manganese ion and inactivates the enzyme. This Mus musculus (Mouse) protein is Protein phosphatase methylesterase 1 (Ppme1).